Here is a 1451-residue protein sequence, read N- to C-terminus: DNA polymerase III PolC-type (1451 aa).

The region spanning 416–575 is the Exonuclease domain; the sequence is FVIFDIETTG…YDTEALKKVF (160 aa).

This sequence belongs to the DNA polymerase type-C family. PolC subfamily.

It is found in the cytoplasm. The catalysed reaction is DNA(n) + a 2'-deoxyribonucleoside 5'-triphosphate = DNA(n+1) + diphosphate. Required for replicative DNA synthesis. This DNA polymerase also exhibits 3' to 5' exonuclease activity. The protein is DNA polymerase III PolC-type of Mycoplasma genitalium (strain ATCC 33530 / DSM 19775 / NCTC 10195 / G37) (Mycoplasmoides genitalium).